Reading from the N-terminus, the 37-residue chain is Cytochrome b6-f complex subunit 5 (37 aa).

Residues serine 5 to alanine 25 traverse the membrane as a helical segment.

Belongs to the PetG family. In terms of assembly, the 4 large subunits of the cytochrome b6-f complex are cytochrome b6, subunit IV (17 kDa polypeptide, PetD), cytochrome f and the Rieske protein, while the 4 small subunits are PetG, PetL, PetM and PetN. The complex functions as a dimer.

The protein localises to the plastid. It localises to the chloroplast thylakoid membrane. In terms of biological role, component of the cytochrome b6-f complex, which mediates electron transfer between photosystem II (PSII) and photosystem I (PSI), cyclic electron flow around PSI, and state transitions. PetG is required for either the stability or assembly of the cytochrome b6-f complex. This is Cytochrome b6-f complex subunit 5 from Arabis hirsuta (Hairy rock-cress).